A 261-amino-acid chain; its full sequence is Ribosome-inactivating protein PD-L1/PD-L2 (261 aa).

Asn10 and Asn43 each carry an N-linked (GlcNAc...) asparagine; in PD-L1 and PD-L2 glycan. Cystine bridges form between Cys34-Cys258 and Cys84-Cys105. Tyr72 is a catalytic residue. Val73 contacts substrate. Residue Ser120 coordinates substrate. Catalysis depends on residues Tyr122, Glu175, and Arg178. Residue Arg178 participates in substrate binding. Asn255 carries an N-linked (GlcNAc...) asparagine; in PD-L1 glycan.

Belongs to the ribosome-inactivating protein family. Type 1 RIP subfamily. N-glycosylated. Loss of glycosylation does not affect DNA-cleaving ability. Loss of glycosylation does not affect protein synthesis inhibition, but increases adenine polynucleotide glycosidase activity likely as a consequence of the increased accessibility of substrates to the active site pocket in the absence of glycosylation. Expressed in leaves (at protein level).

The catalysed reaction is Endohydrolysis of the N-glycosidic bond at one specific adenosine on the 28S rRNA.. In terms of biological role, inhibits protein synthesis. Has adenine polynucleotide glycosidase activity on herring sperm (hs)DNA and poly(A) substrates. Cleaves supercoiled pBR322 dsDNA. The chain is Ribosome-inactivating protein PD-L1/PD-L2 from Phytolacca dioica (Bella sombra tree).